The primary structure comprises 1162 residues: Carbamoyl phosphate synthase large chain (1162 aa).

Residues 1 to 456 are carboxyphosphate synthetic domain; it reads MPKRTDIKSI…SLQKALRGLE (456 aa). Arg129, Arg222, Gly228, Gly229, Glu261, Val263, Glu268, Gly294, Val295, His296, Gln338, and Glu352 together coordinate ATP. One can recognise an ATP-grasp 1 domain in the interval 186–381; it reads ETEWQLGEVE…IAKVAAKLAV (196 aa). Mg(2+)-binding residues include Gln338, Glu352, and Asn354. Mn(2+)-binding residues include Gln338, Glu352, and Asn354. Positions 457-613 are oligomerization domain; it reads TGLTGFDEIA…PFVGQPRSEA (157 aa). The interval 614 to 1025 is carbamoyl phosphate synthetic domain; the sequence is EVSDRKKVVI…AFAKAQLGAG (412 aa). Residues 742–954 form the ATP-grasp 2 domain; that stretch reads QKLLIKLDLN…IAKVAARIMA (213 aa). ATP-binding residues include Arg778, Thr838, Leu840, Glu845, Gly870, Ile871, His872, Ser873, Gln913, and Glu925. Mg(2+) contacts are provided by Gln913, Glu925, and Asn927. Gln913, Glu925, and Asn927 together coordinate Mn(2+). Residues 1026-1162 form the MGS-like domain; it reads VELPREGTVF…VRPLQDYFRS (137 aa). The tract at residues 1026–1162 is allosteric domain; the sequence is VELPREGTVF…VRPLQDYFRS (137 aa).

The protein belongs to the CarB family. Composed of two chains; the small (or glutamine) chain promotes the hydrolysis of glutamine to ammonia, which is used by the large (or ammonia) chain to synthesize carbamoyl phosphate. Tetramer of heterodimers (alpha,beta)4. Requires Mg(2+) as cofactor. The cofactor is Mn(2+).

The catalysed reaction is hydrogencarbonate + L-glutamine + 2 ATP + H2O = carbamoyl phosphate + L-glutamate + 2 ADP + phosphate + 2 H(+). It carries out the reaction hydrogencarbonate + NH4(+) + 2 ATP = carbamoyl phosphate + 2 ADP + phosphate + 2 H(+). Its pathway is amino-acid biosynthesis; L-arginine biosynthesis; carbamoyl phosphate from bicarbonate: step 1/1. The protein operates within pyrimidine metabolism; UMP biosynthesis via de novo pathway; (S)-dihydroorotate from bicarbonate: step 1/3. Large subunit of the glutamine-dependent carbamoyl phosphate synthetase (CPSase). CPSase catalyzes the formation of carbamoyl phosphate from the ammonia moiety of glutamine, carbonate, and phosphate donated by ATP, constituting the first step of 2 biosynthetic pathways, one leading to arginine and/or urea and the other to pyrimidine nucleotides. The large subunit (synthetase) binds the substrates ammonia (free or transferred from glutamine from the small subunit), hydrogencarbonate and ATP and carries out an ATP-coupled ligase reaction, activating hydrogencarbonate by forming carboxy phosphate which reacts with ammonia to form carbamoyl phosphate. This Brucella melitensis biotype 1 (strain ATCC 23456 / CCUG 17765 / NCTC 10094 / 16M) protein is Carbamoyl phosphate synthase large chain.